A 161-amino-acid chain; its full sequence is Small ribosomal subunit protein uS9 (161 aa).

Over residues 1–21 (MATLQSLADLNRANTQTSNPE) the composition is skewed to polar residues. The segment at 1 to 25 (MATLQSLADLNRANTQTSNPENEAP) is disordered.

Belongs to the universal ribosomal protein uS9 family.

The sequence is that of Small ribosomal subunit protein uS9 from Methylorubrum populi (strain ATCC BAA-705 / NCIMB 13946 / BJ001) (Methylobacterium populi).